We begin with the raw amino-acid sequence, 445 residues long: UPF0210 protein SPJ_0248 (445 aa).

Belongs to the UPF0210 family. Homodimer.

In Streptococcus pneumoniae (strain JJA), this protein is UPF0210 protein SPJ_0248.